Reading from the N-terminus, the 315-residue chain is Methionyl-tRNA formyltransferase (315 aa).

S112–P115 lines the (6S)-5,6,7,8-tetrahydrofolate pocket.

The protein belongs to the Fmt family.

The enzyme catalyses L-methionyl-tRNA(fMet) + (6R)-10-formyltetrahydrofolate = N-formyl-L-methionyl-tRNA(fMet) + (6S)-5,6,7,8-tetrahydrofolate + H(+). Functionally, attaches a formyl group to the free amino group of methionyl-tRNA(fMet). The formyl group appears to play a dual role in the initiator identity of N-formylmethionyl-tRNA by promoting its recognition by IF2 and preventing the misappropriation of this tRNA by the elongation apparatus. This is Methionyl-tRNA formyltransferase from Leptospira interrogans serogroup Icterohaemorrhagiae serovar copenhageni (strain Fiocruz L1-130).